A 484-amino-acid polypeptide reads, in one-letter code: Cobyric acid synthase (484 aa).

One can recognise a GATase cobBQ-type domain in the interval 253 to 430 (SLRVAVVRFP…WHGAFEHDEF (178 aa)). Cys334 (nucleophile) is an active-site residue. Residue His422 is part of the active site.

The protein belongs to the CobB/CobQ family. CobQ subfamily.

Its pathway is cofactor biosynthesis; adenosylcobalamin biosynthesis. In terms of biological role, catalyzes amidations at positions B, D, E, and G on adenosylcobyrinic A,C-diamide. NH(2) groups are provided by glutamine, and one molecule of ATP is hydrogenolyzed for each amidation. The polypeptide is Cobyric acid synthase (Cutibacterium acnes (strain DSM 16379 / KPA171202) (Propionibacterium acnes)).